Consider the following 267-residue polypeptide: Acyl-[acyl-carrier-protein]--UDP-N-acetylglucosamine O-acyltransferase (267 aa).

Belongs to the transferase hexapeptide repeat family. LpxA subfamily. Homotrimer.

It is found in the cytoplasm. It catalyses the reaction a (3R)-hydroxyacyl-[ACP] + UDP-N-acetyl-alpha-D-glucosamine = a UDP-3-O-[(3R)-3-hydroxyacyl]-N-acetyl-alpha-D-glucosamine + holo-[ACP]. It participates in glycolipid biosynthesis; lipid IV(A) biosynthesis; lipid IV(A) from (3R)-3-hydroxytetradecanoyl-[acyl-carrier-protein] and UDP-N-acetyl-alpha-D-glucosamine: step 1/6. In terms of biological role, involved in the biosynthesis of lipid A, a phosphorylated glycolipid that anchors the lipopolysaccharide to the outer membrane of the cell. The protein is Acyl-[acyl-carrier-protein]--UDP-N-acetylglucosamine O-acyltransferase of Cupriavidus necator (strain ATCC 17699 / DSM 428 / KCTC 22496 / NCIMB 10442 / H16 / Stanier 337) (Ralstonia eutropha).